A 39-amino-acid polypeptide reads, in one-letter code: Cytochrome b559 subunit beta (39 aa).

The helical transmembrane segment at 14–30 (WLAVHGLAVPTVSFLGS) threads the bilayer. A heme-binding site is contributed by His18.

Belongs to the PsbE/PsbF family. As to quaternary structure, heterodimer of an alpha subunit and a beta subunit. PSII is composed of 1 copy each of membrane proteins PsbA, PsbB, PsbC, PsbD, PsbE, PsbF, PsbH, PsbI, PsbJ, PsbK, PsbL, PsbM, PsbT, PsbX, PsbY, PsbZ, Psb30/Ycf12, at least 3 peripheral proteins of the oxygen-evolving complex and a large number of cofactors. It forms dimeric complexes. Heme b is required as a cofactor.

It is found in the plastid. The protein resides in the chloroplast thylakoid membrane. Functionally, this b-type cytochrome is tightly associated with the reaction center of photosystem II (PSII). PSII is a light-driven water:plastoquinone oxidoreductase that uses light energy to abstract electrons from H(2)O, generating O(2) and a proton gradient subsequently used for ATP formation. It consists of a core antenna complex that captures photons, and an electron transfer chain that converts photonic excitation into a charge separation. The chain is Cytochrome b559 subunit beta from Lotus japonicus (Lotus corniculatus var. japonicus).